The primary structure comprises 351 residues: 3-dehydroquinate synthase (351 aa).

Residues 126-127, lysine 138, and lysine 147 each bind NAD(+); that span reads TT. Residues glutamate 180, histidine 244, and histidine 260 each contribute to the Zn(2+) site.

This sequence belongs to the sugar phosphate cyclases superfamily. Dehydroquinate synthase family. The cofactor is Co(2+). Requires Zn(2+) as cofactor. NAD(+) is required as a cofactor.

The protein resides in the cytoplasm. It carries out the reaction 7-phospho-2-dehydro-3-deoxy-D-arabino-heptonate = 3-dehydroquinate + phosphate. The protein operates within metabolic intermediate biosynthesis; chorismate biosynthesis; chorismate from D-erythrose 4-phosphate and phosphoenolpyruvate: step 2/7. Catalyzes the conversion of 3-deoxy-D-arabino-heptulosonate 7-phosphate (DAHP) to dehydroquinate (DHQ). The protein is 3-dehydroquinate synthase of Exiguobacterium sp. (strain ATCC BAA-1283 / AT1b).